Reading from the N-terminus, the 661-residue chain is tRNA uridine 5-carboxymethylaminomethyl modification enzyme MnmG (661 aa).

FAD contacts are provided by residues 16-21 (GAGHAG), Val128, and Ser183. A disordered region spans residues 206–230 (PRVNGNTIDYSKTEEEPGDKTPRHF). The span at 216 to 230 (SKTEEEPGDKTPRHF) shows a compositional bias: basic and acidic residues. 277–291 (GPRYCPSIEDKVVRF) lines the NAD(+) pocket. Gln374 serves as a coordination point for FAD.

Belongs to the MnmG family. Homodimer. Heterotetramer of two MnmE and two MnmG subunits. FAD serves as cofactor.

It is found in the cytoplasm. Its function is as follows. NAD-binding protein involved in the addition of a carboxymethylaminomethyl (cmnm) group at the wobble position (U34) of certain tRNAs, forming tRNA-cmnm(5)s(2)U34. This is tRNA uridine 5-carboxymethylaminomethyl modification enzyme MnmG from Lactobacillus helveticus (strain DPC 4571).